A 513-amino-acid chain; its full sequence is Ribonuclease Y (513 aa).

Residues 4–24 traverse the membrane as a helical segment; sequence TTSLIIAILAGILGIVIGFFF. The segment at 78–106 is disordered; sequence KSRLKEISRQEDRLNSKEENLERKNASLE. The KH domain occupies 203–288; it reads TVSVVNLPND…EMVEKARKDV (86 aa). One can recognise an HD domain in the interval 329-422; that stretch reads VLKHSIEVSN…VQSADAISAA (94 aa).

This sequence belongs to the RNase Y family.

It localises to the cell membrane. Functionally, endoribonuclease that initiates mRNA decay. The sequence is that of Ribonuclease Y from Finegoldia magna (strain ATCC 29328 / DSM 20472 / WAL 2508) (Peptostreptococcus magnus).